The primary structure comprises 542 residues: Phosphoenolpyruvate carboxykinase (ATP) (542 aa).

Positions 67, 208, and 214 each coordinate substrate. ATP contacts are provided by residues Lys214, His233, and 249–257 (GLSGTGKTT). Mn(2+) contacts are provided by Lys214 and His233. Asp270 is a binding site for Mn(2+). ATP contacts are provided by residues Glu298, Arg334, 450 to 451 (RI), and Thr456. Residue Arg334 coordinates substrate.

This sequence belongs to the phosphoenolpyruvate carboxykinase (ATP) family. In terms of assembly, monomer. It depends on Mn(2+) as a cofactor.

The protein localises to the cytoplasm. It catalyses the reaction oxaloacetate + ATP = phosphoenolpyruvate + ADP + CO2. Its pathway is carbohydrate biosynthesis; gluconeogenesis. Involved in the gluconeogenesis. Catalyzes the conversion of oxaloacetate (OAA) to phosphoenolpyruvate (PEP) through direct phosphoryl transfer between the nucleoside triphosphate and OAA. The protein is Phosphoenolpyruvate carboxykinase (ATP) of Vibrio cholerae serotype O1 (strain ATCC 39541 / Classical Ogawa 395 / O395).